Consider the following 246-residue polypeptide: 4-hydroxy-tetrahydrodipicolinate reductase (246 aa).

Residues glycine 8–methionine 13, aspartate 34, glycine 74–threonine 76, and alanine 101–phenylalanine 104 contribute to the NAD(+) site. Histidine 131 serves as the catalytic Proton donor/acceptor. Position 132 (histidine 132) interacts with (S)-2,3,4,5-tetrahydrodipicolinate. Residue lysine 135 is the Proton donor of the active site. Residue glycine 141–threonine 142 coordinates (S)-2,3,4,5-tetrahydrodipicolinate.

The protein belongs to the DapB family.

The protein localises to the cytoplasm. The catalysed reaction is (S)-2,3,4,5-tetrahydrodipicolinate + NAD(+) + H2O = (2S,4S)-4-hydroxy-2,3,4,5-tetrahydrodipicolinate + NADH + H(+). It catalyses the reaction (S)-2,3,4,5-tetrahydrodipicolinate + NADP(+) + H2O = (2S,4S)-4-hydroxy-2,3,4,5-tetrahydrodipicolinate + NADPH + H(+). It functions in the pathway amino-acid biosynthesis; L-lysine biosynthesis via DAP pathway; (S)-tetrahydrodipicolinate from L-aspartate: step 4/4. In terms of biological role, catalyzes the conversion of 4-hydroxy-tetrahydrodipicolinate (HTPA) to tetrahydrodipicolinate. The polypeptide is 4-hydroxy-tetrahydrodipicolinate reductase (Thermobifida fusca (strain YX)).